We begin with the raw amino-acid sequence, 90 residues long: Mitochondrial import inner membrane translocase subunit Tim8 A (90 aa).

A Twin CX3C motif motif is present at residues Cys36 to Cys59. 2 disulfide bridges follow: Cys36-Cys59 and Cys40-Cys55.

This sequence belongs to the small Tim family. Heterohexamer; composed of 3 copies of TIMM8A and 3 copies of TIMM13, named soluble 70 kDa complex. Associates with the TIM22 complex, whose core is composed of TIMM22.

Its subcellular location is the mitochondrion inner membrane. In terms of biological role, mitochondrial intermembrane chaperone that participates in the import and insertion of some multi-pass transmembrane proteins into the mitochondrial inner membrane. Also required for the transfer of beta-barrel precursors from the TOM complex to the sorting and assembly machinery (SAM complex) of the outer membrane. Acts as a chaperone-like protein that protects the hydrophobic precursors from aggregation and guide them through the mitochondrial intermembrane space. The TIMM8-TIMM13 complex mediates the import of some proteins while the predominant TIMM9-TIMM10 70 kDa complex mediates the import of much more proteins. The chain is Mitochondrial import inner membrane translocase subunit Tim8 A (timm8a) from Danio rerio (Zebrafish).